The chain runs to 679 residues: DNA-directed RNA polymerase subunit beta' (679 aa).

The Zn(2+) site is built by C69, C71, C87, and C90. The Mg(2+) site is built by D489, D491, and D493.

Belongs to the RNA polymerase beta' chain family. RpoC1 subfamily. In terms of assembly, in plastids the minimal PEP RNA polymerase catalytic core is composed of four subunits: alpha, beta, beta', and beta''. When a (nuclear-encoded) sigma factor is associated with the core the holoenzyme is formed, which can initiate transcription. It depends on Mg(2+) as a cofactor. Zn(2+) serves as cofactor.

The protein localises to the plastid. Its subcellular location is the chloroplast. The enzyme catalyses RNA(n) + a ribonucleoside 5'-triphosphate = RNA(n+1) + diphosphate. DNA-dependent RNA polymerase catalyzes the transcription of DNA into RNA using the four ribonucleoside triphosphates as substrates. This is DNA-directed RNA polymerase subunit beta' from Oenothera argillicola (Appalachian evening primrose).